The sequence spans 260 residues: Cytochrome c oxidase subunit 2 (260 aa).

Over 1–43 (MILRSLSCRFLTIALCDAAEPWQLGFQDAATPMMQGIIDLHHD) the chain is Mitochondrial intermembrane. A helical membrane pass occupies residues 44–64 (IFFFLILILVFVLWMLVRALW). Over 65-84 (HFNEQTNPIPQRIVHGTTIE) the chain is Mitochondrial matrix. Residues 85–105 (IIWTIFPSVILLFIAIPSFAL) traverse the membrane as a helical segment. Residues 106–260 (LYSMDGVLVD…VSNQLILQTN (155 aa)) are Mitochondrial intermembrane-facing. Residues H189, C224, E226, C228, H232, and M235 each coordinate Cu cation. E226 contacts Mg(2+).

The protein belongs to the cytochrome c oxidase subunit 2 family. Component of the cytochrome c oxidase (complex IV, CIV), a multisubunit enzyme composed of a catalytic core of 3 subunits and several supernumerary subunits. The complex exists as a monomer or a dimer and forms supercomplexes (SCs) in the inner mitochondrial membrane with ubiquinol-cytochrome c oxidoreductase (cytochrome b-c1 complex, complex III, CIII). Requires Cu cation as cofactor.

It localises to the mitochondrion inner membrane. The catalysed reaction is 4 Fe(II)-[cytochrome c] + O2 + 8 H(+)(in) = 4 Fe(III)-[cytochrome c] + 2 H2O + 4 H(+)(out). Functionally, component of the cytochrome c oxidase, the last enzyme in the mitochondrial electron transport chain which drives oxidative phosphorylation. The respiratory chain contains 3 multisubunit complexes succinate dehydrogenase (complex II, CII), ubiquinol-cytochrome c oxidoreductase (cytochrome b-c1 complex, complex III, CIII) and cytochrome c oxidase (complex IV, CIV), that cooperate to transfer electrons derived from NADH and succinate to molecular oxygen, creating an electrochemical gradient over the inner membrane that drives transmembrane transport and the ATP synthase. Cytochrome c oxidase is the component of the respiratory chain that catalyzes the reduction of oxygen to water. Electrons originating from reduced cytochrome c in the intermembrane space (IMS) are transferred via the dinuclear copper A center (CU(A)) of subunit 2 and heme A of subunit 1 to the active site in subunit 1, a binuclear center (BNC) formed by heme A3 and copper B (CU(B)). The BNC reduces molecular oxygen to 2 water molecules using 4 electrons from cytochrome c in the IMS and 4 protons from the mitochondrial matrix. This Triticum aestivum (Wheat) protein is Cytochrome c oxidase subunit 2 (COX2).